Consider the following 205-residue polypeptide: ATP phosphoribosyltransferase (205 aa).

This sequence belongs to the ATP phosphoribosyltransferase family. Short subfamily. As to quaternary structure, heteromultimer composed of HisG and HisZ subunits.

Its subcellular location is the cytoplasm. The catalysed reaction is 1-(5-phospho-beta-D-ribosyl)-ATP + diphosphate = 5-phospho-alpha-D-ribose 1-diphosphate + ATP. Its pathway is amino-acid biosynthesis; L-histidine biosynthesis; L-histidine from 5-phospho-alpha-D-ribose 1-diphosphate: step 1/9. Functionally, catalyzes the condensation of ATP and 5-phosphoribose 1-diphosphate to form N'-(5'-phosphoribosyl)-ATP (PR-ATP). Has a crucial role in the pathway because the rate of histidine biosynthesis seems to be controlled primarily by regulation of HisG enzymatic activity. The chain is ATP phosphoribosyltransferase from Helicobacter hepaticus (strain ATCC 51449 / 3B1).